A 233-amino-acid chain; its full sequence is Lipoprotein-releasing system ATP-binding protein LolD (233 aa).

The ABC transporter domain occupies 6-233 (LQCDNLCKRY…TAELSLMGAE (228 aa)). Position 42 to 49 (42 to 49 (GSSGSGKS)) interacts with ATP.

Belongs to the ABC transporter superfamily. Lipoprotein translocase (TC 3.A.1.125) family. The complex is composed of two ATP-binding proteins (LolD) and two transmembrane proteins (LolC and LolE).

It is found in the cell inner membrane. Part of the ABC transporter complex LolCDE involved in the translocation of mature outer membrane-directed lipoproteins, from the inner membrane to the periplasmic chaperone, LolA. Responsible for the formation of the LolA-lipoprotein complex in an ATP-dependent manner. The protein is Lipoprotein-releasing system ATP-binding protein LolD of Escherichia coli O6:K15:H31 (strain 536 / UPEC).